The primary structure comprises 382 residues: POU domain, class 3, transcription factor 2-A (382 aa).

Disordered regions lie at residues 69 to 136, 150 to 206, and 348 to 382; these read PWAT…SSNG, GMIN…TPTS, and EKRM…TSVQ. The span at 122–136 shows a compositional bias: polar residues; sequence STGSTHLSSMASSNG. Residues 165–178 show a composition bias toward basic and acidic residues; the sequence is LRDSHDDHHGDHGH. Positions 179–194 are enriched in low complexity; the sequence is QQVSQAQQQHSQLQGG. The 75-residue stretch at 201–275 folds into the POU-specific domain; the sequence is EDTPTSDDLE…LLNKWLEEAD (75 aa). The segment at residues 293–352 is a DNA-binding region (homeobox); it reads KRKKRTSIEVSVKGALESHFLKCPKPSAPEITSLADSLQLEKEVVRVWFCNRRQKEKRMT.

The protein belongs to the POU transcription factor family. Class-3 subfamily. Expressed in the developing brain and spinal cord. Also found in a restricted region of the auditory vesicle during development. In the adult, expression is restricted to the brain.

The protein localises to the nucleus. Functionally, transcription factor that may be implicated in patterning of the central nervous system during early development. This chain is POU domain, class 3, transcription factor 2-A (pou3f2-a), found in Xenopus laevis (African clawed frog).